Reading from the N-terminus, the 151-residue chain is Ocs element-binding factor 1 (151 aa).

Over residues 1–17 (MSSSSLSPTAGRTSGSD) the composition is skewed to polar residues. A disordered region spans residues 1–47 (MSSSSLSPTAGRTSGSDGDSAADTHRREKRRLSNRESARRSRLRKQQ). The span at 22–39 (ADTHRREKRRLSNRESAR) shows a compositional bias: basic and acidic residues. One can recognise a bZIP domain in the interval 24 to 87 (THRREKRRLS…TRVEQENTVL (64 aa)). Positions 26–45 (RREKRRLSNRESARRSRLRK) are basic motif. Residues 52–59 (LVQEVARL) are leucine-zipper.

The protein belongs to the bZIP family. In terms of tissue distribution, roots and shoots of young plants, and basal portion of leaves.

The protein localises to the nucleus. May contribute to developmentally specific patterns of gene expression. Binds specifically to ocs elements which are transcriptional enhancer found in the promoters of several plant genes. OCSBF-1 is able to bind to a site within each half of the ocs element as well as to animal AP-1 and CREB sites. This is Ocs element-binding factor 1 (OBF1) from Zea mays (Maize).